The sequence spans 320 residues: Very-long-chain 3-oxoacyl-CoA reductase (320 aa).

A helical transmembrane segment spans residues 17–37 (FWYLGVVAAVWWGLRAAWCLL). 56–85 (GKWAVVTGATDGIGKAYAEELAKRGMNIVL) serves as a coordination point for NADP(+). 2 consecutive transmembrane segments (helical) span residues 189–209 (GVILNISSASGMYPVPLLTVY) and 283–303 (AIMGWISTSLVPVSTAISLGM). Serine 196 is a substrate binding site. Tyrosine 209 acts as the Proton acceptor in catalysis.

Belongs to the short-chain dehydrogenases/reductases (SDR) family. 17-beta-HSD 3 subfamily.

The protein resides in the endoplasmic reticulum membrane. It catalyses the reaction a very-long-chain (3R)-3-hydroxyacyl-CoA + NADP(+) = a very-long-chain 3-oxoacyl-CoA + NADPH + H(+). The catalysed reaction is 17beta-estradiol + NAD(+) = estrone + NADH + H(+). The enzyme catalyses 17beta-estradiol + NADP(+) = estrone + NADPH + H(+). It carries out the reaction 3-oxooctadecanoyl-CoA + NADPH + H(+) = (3R)-hydroxyoctadecanoyl-CoA + NADP(+). It catalyses the reaction (7Z,10Z,13Z,16Z)-3-oxodocosatetraenoyl-CoA + NADPH + H(+) = (3R)-hydroxy-(7Z,10Z,13Z,16Z)-docosatetraenoyl-CoA + NADP(+). The catalysed reaction is 3-oxo-(7Z,10Z,13Z,16Z,19Z)-docosapentaenoyl-CoA + NADPH + H(+) = (3R)-hydroxy-(7Z,10Z,13Z,16Z,19Z)-docosapentaenoyl-CoA + NADP(+). The enzyme catalyses (8Z,11Z,14Z)-3-oxoeicosatrienoyl-CoA + NADPH + H(+) = (3R)-hydroxy-(8Z,11Z,14Z)-eicosatrienoyl-CoA + NADP(+). It participates in lipid metabolism; fatty acid biosynthesis. It functions in the pathway steroid biosynthesis; estrogen biosynthesis. In terms of biological role, catalyzes the second of the four reactions of the long-chain fatty acids elongation cycle. This endoplasmic reticulum-bound enzymatic process, allows the addition of two carbons to the chain of long- and very long-chain fatty acids/VLCFAs per cycle. This enzyme has a 3-ketoacyl-CoA reductase activity, reducing 3-ketoacyl-CoA to 3-hydroxyacyl-CoA, within each cycle of fatty acid elongation. Thereby, it may participate in the production of VLCFAs of different chain lengths that are involved in multiple biological processes as precursors of membrane lipids and lipid mediators. May also catalyze the transformation of estrone (E1) into estradiol (E2) and play a role in estrogen formation. In Xenopus tropicalis (Western clawed frog), this protein is Very-long-chain 3-oxoacyl-CoA reductase (hsd17b12).